The sequence spans 56 residues: Large ribosomal subunit protein bL32 (56 aa).

Over residues 1-19 (MAVPKRKKSRSTTRHRRAQ) the composition is skewed to basic residues. The tract at residues 1–22 (MAVPKRKKSRSTTRHRRAQWKT) is disordered.

It belongs to the bacterial ribosomal protein bL32 family.

The protein is Large ribosomal subunit protein bL32 of Cutibacterium acnes (strain DSM 16379 / KPA171202) (Propionibacterium acnes).